A 326-amino-acid polypeptide reads, in one-letter code: tRNA-modifying protein YgfZ (326 aa).

2 residues coordinate folate: Trp27 and Trp189.

Belongs to the tRNA-modifying YgfZ family.

The protein localises to the cytoplasm. Functionally, folate-binding protein involved in regulating the level of ATP-DnaA and in the modification of some tRNAs. It is probably a key factor in regulatory networks that act via tRNA modification, such as initiation of chromosomal replication. The chain is tRNA-modifying protein YgfZ from Salmonella paratyphi A (strain AKU_12601).